We begin with the raw amino-acid sequence, 475 residues long: BTB/POZ domain-containing protein 10 (475 aa).

Residues 1 to 144 are disordered; that stretch reads MAGRPHPYDS…SQSSSDGSCK (144 aa). Over residues 22–31 the composition is skewed to basic residues; it reads LHSRPRKLYK. The span at 57 to 80 shows a compositional bias: basic and acidic residues; sequence GHERSRDRRRSSDRSRDSSHERAE. Residues 81-94 show a composition bias toward polar residues; sequence SQLTPCIRNVTSPT. Residues 97 to 107 are compositionally biased toward basic and acidic residues; that stretch reads HHIEREKDHSS. Residues 108 to 144 are compositionally biased toward low complexity; sequence SRPSSPRPQRASPNGSMSSAGNSSRNSSQSSSDGSCK. The interval 146 to 475 is interaction with AKT family members; that stretch reads SGEMVFVYEN…LDPDAQNPML (330 aa). One can recognise a BTB domain in the interval 167–241; sequence ERVTLIVDNT…YKTGIIRCPD (75 aa). The segment at 451–475 is disordered; the sequence is ELDILPSHPASGNNDLDPDAQNPML.

As to quaternary structure, interacts (via C-terminal 330-amino-acid region) with AKT1; AKT2 and AKT3. Interacts with PPP2CA and PPP1CA. As to expression, ubiquitously expressed (at protein level).

The protein resides in the nucleus. The protein localises to the cytoplasm. In terms of biological role, plays a major role as an activator of AKT family members by inhibiting PPP2CA-mediated dephosphorylation, thereby keeping AKTs activated. Plays a role in preventing motor neuronal death and in accelerating the growth of pancreatic beta cells. In Mus musculus (Mouse), this protein is BTB/POZ domain-containing protein 10 (Btbd10).